Consider the following 420-residue polypeptide: MAPK/MAK/MRK overlapping kinase (420 aa).

The region spanning 4–285 is the Protein kinase domain; the sequence is YKAIGKIGEG…AHQALQHPYF (282 aa). Residues 10-18 and Lys33 contribute to the ATP site; that span reads IGEGTFSEV. Asp128 (proton acceptor) is an active-site residue. Residues 311-322 are compositionally biased toward polar residues; sequence PESSSHNWSFSQ. The segment at 311–344 is disordered; sequence PESSSHNWSFSQEGRKQKQSLRHEEGHARRQGPT. The span at 323 to 338 shows a compositional bias: basic and acidic residues; it reads EGRKQKQSLRHEEGHA.

Belongs to the protein kinase superfamily. CMGC Ser/Thr protein kinase family. CDC2/CDKX subfamily. Mg(2+) serves as cofactor. Post-translationally, autophosphorylated. As to expression, highly expressed in testis, and less in kidney, brain and lung.

The protein resides in the cytoplasm. It is found in the cell projection. Its subcellular location is the cilium. It localises to the nucleus. It catalyses the reaction L-seryl-[protein] + ATP = O-phospho-L-seryl-[protein] + ADP + H(+). It carries out the reaction L-threonyl-[protein] + ATP = O-phospho-L-threonyl-[protein] + ADP + H(+). With respect to regulation, phosphorylation appears to increase the enzymatic activity. Its function is as follows. Able to phosphorylate several exogenous substrates and to undergo autophosphorylation. Negatively regulates cilium length in a cAMP and mTORC1 signaling-dependent manner. This chain is MAPK/MAK/MRK overlapping kinase (Mok), found in Mus musculus (Mouse).